A 475-amino-acid polypeptide reads, in one-letter code: Ribulose bisphosphate carboxylase large chain (475 aa).

The propeptide occupies 1–2; that stretch reads MS. Residue P3 is modified to N-acetylproline. K14 carries the post-translational modification N6,N6,N6-trimethyllysine. N123 and T173 together coordinate substrate. Residue K175 is the Proton acceptor of the active site. K177 provides a ligand contact to substrate. Residues K201, D203, and E204 each coordinate Mg(2+). K201 carries the N6-carboxylysine modification. H294 functions as the Proton acceptor in the catalytic mechanism. Residues R295, H327, and S379 each coordinate substrate.

The protein belongs to the RuBisCO large chain family. Type I subfamily. As to quaternary structure, heterohexadecamer of 8 large chains and 8 small chains; disulfide-linked. The disulfide link is formed within the large subunit homodimers. Mg(2+) is required as a cofactor. Post-translationally, the disulfide bond which can form in the large chain dimeric partners within the hexadecamer appears to be associated with oxidative stress and protein turnover.

The protein localises to the plastid. The protein resides in the chloroplast. The enzyme catalyses 2 (2R)-3-phosphoglycerate + 2 H(+) = D-ribulose 1,5-bisphosphate + CO2 + H2O. It carries out the reaction D-ribulose 1,5-bisphosphate + O2 = 2-phosphoglycolate + (2R)-3-phosphoglycerate + 2 H(+). RuBisCO catalyzes two reactions: the carboxylation of D-ribulose 1,5-bisphosphate, the primary event in carbon dioxide fixation, as well as the oxidative fragmentation of the pentose substrate in the photorespiration process. Both reactions occur simultaneously and in competition at the same active site. This is Ribulose bisphosphate carboxylase large chain from Amaranthus tricolor (Joseph's coat).